The primary structure comprises 481 residues: 3-isopropylmalate dehydratase large subunit (481 aa).

C357, C417, and C420 together coordinate [4Fe-4S] cluster. Positions 429–441 (SPGQRCASTSNRN) are enriched in polar residues. Positions 429–451 (SPGQRCASTSNRNFEGRQGKGGR) are disordered.

It belongs to the aconitase/IPM isomerase family. LeuC type 1 subfamily. Heterodimer of LeuC and LeuD. It depends on [4Fe-4S] cluster as a cofactor.

The catalysed reaction is (2R,3S)-3-isopropylmalate = (2S)-2-isopropylmalate. It functions in the pathway amino-acid biosynthesis; L-leucine biosynthesis; L-leucine from 3-methyl-2-oxobutanoate: step 2/4. Catalyzes the isomerization between 2-isopropylmalate and 3-isopropylmalate, via the formation of 2-isopropylmaleate. The protein is 3-isopropylmalate dehydratase large subunit of Mycobacterium sp. (strain JLS).